The sequence spans 388 residues: Succinate--CoA ligase [ADP-forming] subunit beta (388 aa).

Residues 9–244 (KSLFAEYGLP…PSQDDAREAH (236 aa)) enclose the ATP-grasp domain. Residues K46, 53-55 (GRG), E99, T102, and E107 each bind ATP. Residues N199 and D213 each contribute to the Mg(2+) site. Substrate-binding positions include N264 and 321–323 (GIV).

The protein belongs to the succinate/malate CoA ligase beta subunit family. In terms of assembly, heterotetramer of two alpha and two beta subunits. It depends on Mg(2+) as a cofactor.

The catalysed reaction is succinate + ATP + CoA = succinyl-CoA + ADP + phosphate. It carries out the reaction GTP + succinate + CoA = succinyl-CoA + GDP + phosphate. Its pathway is carbohydrate metabolism; tricarboxylic acid cycle; succinate from succinyl-CoA (ligase route): step 1/1. Functionally, succinyl-CoA synthetase functions in the citric acid cycle (TCA), coupling the hydrolysis of succinyl-CoA to the synthesis of either ATP or GTP and thus represents the only step of substrate-level phosphorylation in the TCA. The beta subunit provides nucleotide specificity of the enzyme and binds the substrate succinate, while the binding sites for coenzyme A and phosphate are found in the alpha subunit. This Shewanella sp. (strain ANA-3) protein is Succinate--CoA ligase [ADP-forming] subunit beta.